The following is a 145-amino-acid chain: Peptide methionine sulfoxide reductase MsrB (145 aa).

A MsrB domain is found at 4-127; the sequence is SDELKQRIGD…NSAALKFIPY (124 aa). Cys116 (nucleophile) is an active-site residue.

The protein belongs to the MsrB Met sulfoxide reductase family.

The enzyme catalyses L-methionyl-[protein] + [thioredoxin]-disulfide + H2O = L-methionyl-(R)-S-oxide-[protein] + [thioredoxin]-dithiol. The chain is Peptide methionine sulfoxide reductase MsrB from Streptococcus pyogenes serotype M1.